A 290-amino-acid chain; its full sequence is GTPase Era (290 aa).

The Era-type G domain occupies 2–169 (KSGFVSIIGR…KDKIYANLQE (168 aa)). The G1 stretch occupies residues 10 to 17 (GRPSTGKS). Residue 10-17 (GRPSTGKS) coordinates GTP. The G2 stretch occupies residues 36–40 (QTTRN). Positions 57 to 60 (DTPG) are G3. Residues 57–61 (DTPGF) and 119–122 (NKID) each bind GTP. The interval 119–122 (NKID) is G4. A G5 region spans residues 148–150 (ISA). One can recognise a KH type-2 domain in the interval 200–276 (LKEELPYSLY…DLFLQVKLRK (77 aa)).

Belongs to the TRAFAC class TrmE-Era-EngA-EngB-Septin-like GTPase superfamily. Era GTPase family. Monomer.

The protein resides in the cytoplasm. It localises to the cell inner membrane. In terms of biological role, an essential GTPase that binds both GDP and GTP, with rapid nucleotide exchange. Plays a role in 16S rRNA processing and 30S ribosomal subunit biogenesis and possibly also in cell cycle regulation and energy metabolism. This chain is GTPase Era, found in Borrelia hermsii (strain HS1 / DAH).